Consider the following 477-residue polypeptide: Kinesin-like protein KIN-1 (477 aa).

Residues 3 to 330 form the Kinesin motor domain; that stretch reads NVTVCVRFRP…VRFGTRTKLI (328 aa). Residue 86-93 coordinates ATP; that stretch reads GQTGAGKT. A coiled-coil region spans residues 402–451; that stretch reads QDAASQEVSLLTQAVEELKETVEELTDENERLRGELELAQEAAAAAAAAR.

Belongs to the TRAFAC class myosin-kinesin ATPase superfamily. Kinesin family. KIN-1 subfamily. As to expression, widely expressed. Expressed in young roots and leaves, in mature roots, culm, sheath and leaves, and in panicles at various developmental stages. Strongest expression is detected in panicles. In the panicle, expression is detected in anthers, glumme, lemma and palea. In the spikelet, expression is detected in both microsporocyte and the anther walls.

It is found in the cytoplasm. In terms of biological role, kinesin-like motor protein that exhibits microtubule-stimulated ATPase activity. Plays an essential role in male meiotic chromosomal dynamics, male gametogenesis and anther dehiscence. May play a minor and nonessential role in regulating meiotic spindle formation. In Oryza sativa subsp. japonica (Rice), this protein is Kinesin-like protein KIN-1.